A 578-amino-acid chain; its full sequence is ATP-dependent RNA helicase has-1 (578 aa).

The disordered stretch occupies residues 1–91 (MASEFSKKRK…KDAEAGDELT (91 aa)). Residues 13 to 26 (DAKIATEDGAATDK) show a composition bias toward basic and acidic residues. A compositionally biased stretch (basic residues) spans 27–36 (KTKKVKKDKK). 2 stretches are compositionally biased toward acidic residues: residues 43-54 (EVVEDATPEEEN) and 77-88 (EDSDDKDAEAGD). The Q motif motif lies at 107–135 (TDFSELNLSDKTMKAIAEMGFTKMTEIQR). A Helicase ATP-binding domain is found at 138-313 (IPPLLAGKDV…RISLRPGPLY (176 aa)). 151 to 158 (AKTGSGKT) is an ATP binding site. The short motif at 260–263 (DEAD) is the DEAD box element. The Bipartite nuclear localization signal signature appears at 339–355 (KRFLLLFSFLKKMQKKK). In terms of domain architecture, Helicase C-terminal spans 343–497 (LLFSFLKKMQ…NVQSQLEKLI (155 aa)). The disordered stretch occupies residues 556-578 (SMSRDKKQTSRRAYGSQPKQNRH).

Belongs to the DEAD box helicase family. DDX18/HAS1 subfamily. In terms of assembly, associates in the nucleolus with the 60S and pre-60S ribosomal subunits.

Its subcellular location is the nucleus. The protein localises to the nucleolus. The catalysed reaction is ATP + H2O = ADP + phosphate + H(+). Functionally, ATP-dependent RNA helicase involved in 40S ribosomal subunit biogenesis. Required for the processing and cleavage of 35S pre-rRNA at sites A0, A1, and A2, leading to mature 18S rRNA. The sequence is that of ATP-dependent RNA helicase has-1 (has-1) from Neurospora crassa (strain ATCC 24698 / 74-OR23-1A / CBS 708.71 / DSM 1257 / FGSC 987).